A 644-amino-acid chain; its full sequence is MAGQLRLTSGKDEDHFQHQGAVELLAFNFLLILTILTIWLFKNHRFRFLHETGGAMVYGLIMGLILRYATAPTDIDSGTVYNCGKLLFSPSTLLVNITDQVYEYKYQREINQHNISPHQGNAILEKMTFDPEIFFNVLLPPIIFHAGYSLKKRHFFQNLGSILTYAFLGTAISCVVIGLIMYGFVKAMVHAGQLKSGDFHFTDCLFFGSLMSATDPVTVLAIFHELHVDPDLYTLLFGESVLNDAVAIVLTYSISIYSPKENPNAFDTAAFFQSVGNFLGIFAGSFAMGSAYAVVTALLTKFTKLREFPMLETGLFFLLSWSAFLSAEAAGLTGIVAVLFCGVTQAHYTYNNLSSDSKLRTKQLFEFMNFLAENVIFCYMGLALFTFQNHIFNALFILGAFLAIFVARACNIYPLSFLLNLGRKQKIPWNFQHMMMFSGLRGAIAFALAIRNTESQPKQMMFTTTLLLVFFTVWVFGGGTTPMLTWLQIRVGVDLDESLKEEPSSQQEANKVDKDMTKTESAQLFRMWYGFDHKYLKPILTHSGPPLTTTLPAWCGPVSRLLTSPQAYGEQLKEDDVECIVNQDELAMNYQEQSPTSSSPATKLALDQKSSGLTLGKENIYEGDLGLGGYELKLEQTRGQPQMD.

Residues 1 to 20 (MAGQLRLTSGKDEDHFQHQG) are Lumenal-facing. Residues 21–41 (AVELLAFNFLLILTILTIWLF) traverse the membrane as a helical segment. The Cytoplasmic portion of the chain corresponds to 42 to 45 (KNHR). Residues 46–66 (FRFLHETGGAMVYGLIMGLIL) traverse the membrane as a helical segment. Over 67-126 (RYATAPTDIDSGTVYNCGKLLFSPSTLLVNITDQVYEYKYQREINQHNISPHQGNAILEK) the chain is Lumenal. The helical transmembrane segment at 127–147 (MTFDPEIFFNVLLPPIIFHAG) threads the bilayer. Residues 148–164 (YSLKKRHFFQNLGSILT) lie on the Cytoplasmic side of the membrane. A helical membrane pass occupies residues 165-185 (YAFLGTAISCVVIGLIMYGFV). Over 186-203 (KAMVHAGQLKSGDFHFTD) the chain is Lumenal. The chain crosses the membrane as a helical span at residues 204 to 224 (CLFFGSLMSATDPVTVLAIFH). Residues 225–235 (ELHVDPDLYTL) are Cytoplasmic-facing. Residues 236–256 (LFGESVLNDAVAIVLTYSISI) traverse the membrane as a helical segment. Residues 257–277 (YSPKENPNAFDTAAFFQSVGN) are Lumenal-facing. The helical transmembrane segment at 278 to 298 (FLGIFAGSFAMGSAYAVVTAL) threads the bilayer. At 299–309 (LTKFTKLREFP) the chain is on the cytoplasmic side. Residues 310-327 (MLETGLFFLLSWSAFLSA) form a helical membrane-spanning segment. Over 328-333 (EAAGLT) the chain is Lumenal. Residues 334 to 350 (GIVAVLFCGVTQAHYTY) traverse the membrane as a helical segment. Residues 351-364 (NNLSSDSKLRTKQL) are Cytoplasmic-facing. The helical transmembrane segment at 365-385 (FEFMNFLAENVIFCYMGLALF) threads the bilayer. Thr386 is a topological domain (lumenal). A helical membrane pass occupies residues 387 to 407 (FQNHIFNALFILGAFLAIFVA). The Cytoplasmic portion of the chain corresponds to 408–429 (RACNIYPLSFLLNLGRKQKIPW). Residues 430–450 (NFQHMMMFSGLRGAIAFALAI) traverse the membrane as a helical segment. Residues 451–465 (RNTESQPKQMMFTTT) lie on the Lumenal side of the membrane. The chain crosses the membrane as a helical span at residues 466 to 486 (LLLVFFTVWVFGGGTTPMLTW). Over 487-644 (LQIRVGVDLD…EQTRGQPQMD (158 aa)) the chain is Cytoplasmic.

Belongs to the monovalent cation:proton antiporter 1 (CPA1) transporter (TC 2.A.36) family. As to quaternary structure, homodimer; phosphatidylinositol-4,5-bisphosphate (PIP2) and phosphatidylinositol 3,4,5-trisphosphate (PIP3) could be involved in the dimer stabilization. Interacts (via the C-terminus) with RACK1. Interacts with CHP1. Expressed in hair bundles and in vestibular hair bundles. Expressed in brain.

The protein resides in the late endosome membrane. It is found in the early endosome membrane. The protein localises to the recycling endosome membrane. It localises to the cell membrane. Its subcellular location is the cytoplasmic vesicle. The protein resides in the phagosome membrane. The catalysed reaction is Na(+)(in) + H(+)(out) = Na(+)(out) + H(+)(in). It catalyses the reaction K(+)(in) + H(+)(out) = K(+)(out) + H(+)(in). Functionally, endosomal Na(+), K(+)/H(+) antiporter. Mediates the electroneutral exchange of endosomal luminal H(+) for a cytosolic Na(+) or K(+). By facilitating proton efflux, SLC9A9 counteracts the acidity generated by vacuolar (V)-ATPase, thereby limiting luminal acidification. Regulates organellar pH and consequently, endosome maturation and endocytic trafficking of plasma membrane receptors and neurotransporters. Promotes the recycling of transferrin receptors back to the cell surface to facilitate additional iron uptake in the brain. Regulates synaptic transmission by regulating the luminal pH of axonal endosomes. Regulates phagosome lumenal pH, thus affecting phagosome maturation, and consequently, microbicidal activity in macrophages. Can also be active at the cell surface of specialized cells, e.g., in the inner ear hair bundles uses the high K(+) of the endolymph to regulate intracelular pH. The chain is Sodium/hydrogen exchanger 9 (Slc9a9) from Rattus norvegicus (Rat).